Reading from the N-terminus, the 801-residue chain is K(+)-insensitive pyrophosphate-energized proton pump (801 aa).

5 helical membrane-spanning segments follow: residues 27-47 (VIVM…GILV), 81-101 (TLGV…ADDW), 109-129 (VFFL…MWLA), 170-190 (GVVG…VVLV), and 201-221 (GFGL…GIFT). Substrate is bound at residue Lys222. The Mg(2+) site is built by Asp225, Asp229, Asn252, and Asp255. Transmembrane regions (helical) follow at residues 261-281 (AGMA…ALIL), 292-312 (AFPL…IFAV), 328-348 (GFFV…YVYL), 372-392 (ILAM…QQLT), 406-426 (IGKS…SVGL), 429-449 (AVYT…LGGT), and 453-473 (LALF…GVIV). Asp483 serves as a coordination point for Mg(2+). 4 helical membrane passes run 515–535 (AITK…LFGS), 571–591 (VGLI…INAV), 641–661 (LLAV…ALGA), and 663–683 (LAGA…SGGA). Residues Asp685, Asp711, and Asp715 each coordinate Ca(2+). Residue Lys718 coordinates substrate. Helical transmembrane passes span 724–744 (AINP…PAVV) and 754–774 (LGVR…AVYI).

It belongs to the H(+)-translocating pyrophosphatase (TC 3.A.10) family. K(+)-insensitive subfamily. Homodimer. Requires Mg(2+) as cofactor.

The protein resides in the cell membrane. The catalysed reaction is diphosphate + H2O + H(+)(in) = 2 phosphate + 2 H(+)(out). Proton pump that utilizes the energy of pyrophosphate hydrolysis as the driving force for proton movement across the membrane. Generates a proton motive force. In Streptomyces avermitilis (strain ATCC 31267 / DSM 46492 / JCM 5070 / NBRC 14893 / NCIMB 12804 / NRRL 8165 / MA-4680), this protein is K(+)-insensitive pyrophosphate-energized proton pump.